The sequence spans 642 residues: Threonine--tRNA ligase (642 aa).

The tract at residues 239–530 is catalytic; the sequence is DHRKLGKELN…LTEHYAGAFP (292 aa). C331, H382, and H507 together coordinate Zn(2+).

Belongs to the class-II aminoacyl-tRNA synthetase family. In terms of assembly, homodimer. It depends on Zn(2+) as a cofactor.

It localises to the cytoplasm. The catalysed reaction is tRNA(Thr) + L-threonine + ATP = L-threonyl-tRNA(Thr) + AMP + diphosphate + H(+). Its function is as follows. Catalyzes the attachment of threonine to tRNA(Thr) in a two-step reaction: L-threonine is first activated by ATP to form Thr-AMP and then transferred to the acceptor end of tRNA(Thr). Also edits incorrectly charged L-seryl-tRNA(Thr). In Lawsonia intracellularis (strain PHE/MN1-00), this protein is Threonine--tRNA ligase.